Consider the following 134-residue polypeptide: Arsenate reductase (134 aa).

Residues Cys11, Cys83, and Cys90 each act as nucleophile in the active site. 2 cysteine pairs are disulfide-bonded: Cys11-Cys83 and Cys83-Cys90.

This sequence belongs to the low molecular weight phosphotyrosine protein phosphatase family. Thioredoxin-coupled ArsC subfamily.

It is found in the cytoplasm. The enzyme catalyses arsenate + [thioredoxin]-dithiol + H(+) = arsenite + [thioredoxin]-disulfide + H2O. Its function is as follows. Catalyzes the reduction of arsenate [As(V)] to arsenite [As(III)]. The sequence is that of Arsenate reductase from Brevibacillus brevis (strain 47 / JCM 6285 / NBRC 100599).